The chain runs to 556 residues: Dihydroxy-acid dehydratase (556 aa).

Cys47 contributes to the [2Fe-2S] cluster binding site. Residue Asp79 participates in Mg(2+) binding. A [2Fe-2S] cluster-binding site is contributed by Cys120. Residues Asp121 and Lys122 each contribute to the Mg(2+) site. An N6-carboxylysine modification is found at Lys122. Cys192 contacts [2Fe-2S] cluster. Glu444 is a binding site for Mg(2+). The Proton acceptor role is filled by Ser470.

Belongs to the IlvD/Edd family. In terms of assembly, homodimer. Requires [2Fe-2S] cluster as cofactor. It depends on Mg(2+) as a cofactor.

It carries out the reaction (2R)-2,3-dihydroxy-3-methylbutanoate = 3-methyl-2-oxobutanoate + H2O. The enzyme catalyses (2R,3R)-2,3-dihydroxy-3-methylpentanoate = (S)-3-methyl-2-oxopentanoate + H2O. It functions in the pathway amino-acid biosynthesis; L-isoleucine biosynthesis; L-isoleucine from 2-oxobutanoate: step 3/4. The protein operates within amino-acid biosynthesis; L-valine biosynthesis; L-valine from pyruvate: step 3/4. In terms of biological role, functions in the biosynthesis of branched-chain amino acids. Catalyzes the dehydration of (2R,3R)-2,3-dihydroxy-3-methylpentanoate (2,3-dihydroxy-3-methylvalerate) into 2-oxo-3-methylpentanoate (2-oxo-3-methylvalerate) and of (2R)-2,3-dihydroxy-3-methylbutanoate (2,3-dihydroxyisovalerate) into 2-oxo-3-methylbutanoate (2-oxoisovalerate), the penultimate precursor to L-isoleucine and L-valine, respectively. The polypeptide is Dihydroxy-acid dehydratase (Prochlorococcus marinus (strain MIT 9303)).